Here is a 209-residue protein sequence, read N- to C-terminus: Lysine-rich arabinogalactan protein 18 (209 aa).

The first 21 residues, 1 to 21, serve as a signal peptide directing secretion; sequence MDRNFLLTVTLICIVVAGVGG. The interval 21-185 is disordered; the sequence is GQSPISSPTK…PSADDQSGAA (165 aa). Residues 23 to 79 show a composition bias toward low complexity; sequence SPISSPTKSPTTPSAPTTSPTKSPAVTSPTTAPAKTPTASASSPVESPKSPAPVSES. Pro residues-rich tracts occupy residues 80-95 and 103-119; these read SPPP…PVPA and SSPP…PAPV. Over residues 132 to 145 the composition is skewed to basic residues; sequence SKHKKTTKKSKKHQ. The span at 149–164 shows a compositional bias: pro residues; sequence APAPELLGPPAPPTES. The GPI-anchor amidated glycine moiety is linked to residue G183. Positions 184-209 are cleaved as a propeptide — removed in mature form; the sequence is AASTRVLRNVAVGAVATAWAVLVMAF.

This sequence belongs to the lysine-rich AGP family. O-glycosylated on the hydroxyproline residues. Predominantly expressed in flowers, and moderately expressed in roots, stems and young leaves.

The protein resides in the cell membrane. In terms of biological role, proteoglycan that seems to be implicated in diverse developmental roles such as differentiation, cell-cell recognition, embryogenesis and programmed cell death. The polypeptide is Lysine-rich arabinogalactan protein 18 (AGP18) (Arabidopsis thaliana (Mouse-ear cress)).